The chain runs to 120 residues: UPF0231 protein YacL (120 aa).

This sequence belongs to the UPF0231 family.

The sequence is that of UPF0231 protein YacL from Salmonella paratyphi A (strain ATCC 9150 / SARB42).